The primary structure comprises 843 residues: MPLSYQHFRKLLLLDDEAGPLEEELPRLADEGLNRRVAEDLNLGNLNVSIPWTHKVGNFTGLYSSTVPSFNPQWQTPSFPDIHLQEDIINKCKQFVGPLTVNEKRRLKLIMPARFYPNVTKYLPLDKGIKPYYPEHVVNHYFQTRHYLHTLWKAGILYKRETTRSASFCGSPYSWEQELQHGRLVLQTSTRHGDKSFRPQSSGILSRSPVGPCIQSQLRQSRLGPQPTQGQLAGLQQGGSGSIRAGIHSTPWGTVGVEPSSSGHTHNCANSSSSCLHQSAVRKEAYSPVSTSKRHSSSGNAVELHHVPPNSSRSQSQGSVLSCWWLQFRNSKPCSEHCLFHIVNLIDDWGPCAEHGEHRIRTPRTPARVTGGVFLVDKNPHNTSESRLVVDFSQFSRGNTRVSWPKFAVPNLQSLTNLLSSDLSWLSLDVSAAFYHLPLHPAAMPHLLVGSSGLSRYVARLSSNSRIINHQHRTMQNLHDSCSRNLYVSLMLLYKTYGRKLHLYSHPIILGFRKIPMGVGLSPFLLAQFTSAICSVVRRAFPHCLAFSYMDDVVLGAKSVQHLESLYAAVTNFLLSLGIHLNPQKTKRWGYSLNFMGYVIGSWGTLPQEHIVLKIKQCFRKLPVNRPIDWKVCQRIVGLLGFAAPFTQCGYPALMPLYACIQAKQAFTFSPTYKAFLNKQYLNLYPVARQRPGLCQVFADATPTGWGLAIGHQRMRGTFVSPLPIHTVELLAACFARSRSGAKLIGTDNSVVLSRKYTSFPWLLGCAANWILRGTSFVYVPSALNPADDPSRGRLGLYRPLLRLPYRPTTGRTSLYADSPSVPSHLPDRVHFASPLHVAWRPP.

A terminal protein domain (TP) region spans residues 1–177; sequence MPLSYQHFRK…FCGSPYSWEQ (177 aa). Residues 178 to 346 are spacer; it reads ELQHGRLVLQ…HCLFHIVNLI (169 aa). Disordered regions lie at residues 221-240 and 289-315; these read SRLG…QGGS and VSTS…SRSQ. The span at 223 to 235 shows a compositional bias: low complexity; that stretch reads LGPQPTQGQLAGL. Positions 347-690 are polymerase/reverse transcriptase domain (RT); sequence DDWGPCAEHG…YLNLYPVARQ (344 aa). In terms of domain architecture, Reverse transcriptase spans 357–600; the sequence is EHRIRTPRTP…YSLNFMGYVI (244 aa). Residues Asp429, Asp551, and Asp552 each contribute to the Mg(2+) site.

This sequence belongs to the hepadnaviridae P protein family.

The catalysed reaction is DNA(n) + a 2'-deoxyribonucleoside 5'-triphosphate = DNA(n+1) + diphosphate. The enzyme catalyses Endonucleolytic cleavage to 5'-phosphomonoester.. With respect to regulation, activated by host HSP70 and HSP40 in vitro to be able to bind the epsilon loop of the pgRNA. Because deletion of the RNase H region renders the protein partly chaperone-independent, the chaperones may be needed indirectly to relieve occlusion of the RNA-binding site by this domain. Inhibited by several reverse-transcriptase inhibitors: Lamivudine, Adefovir and Entecavir. Multifunctional enzyme that converts the viral RNA genome into dsDNA in viral cytoplasmic capsids. This enzyme displays a DNA polymerase activity that can copy either DNA or RNA templates, and a ribonuclease H (RNase H) activity that cleaves the RNA strand of RNA-DNA heteroduplexes in a partially processive 3'- to 5'-endonucleasic mode. Neo-synthesized pregenomic RNA (pgRNA) are encapsidated together with the P protein, and reverse-transcribed inside the nucleocapsid. Initiation of reverse-transcription occurs first by binding the epsilon loop on the pgRNA genome, and is initiated by protein priming, thereby the 5'-end of (-)DNA is covalently linked to P protein. Partial (+)DNA is synthesized from the (-)DNA template and generates the relaxed circular DNA (RC-DNA) genome. After budding and infection, the RC-DNA migrates in the nucleus, and is converted into a plasmid-like covalently closed circular DNA (cccDNA). The activity of P protein does not seem to be necessary for cccDNA generation, and is presumably released from (+)DNA by host nuclear DNA repair machinery. The polypeptide is Protein P (Homo sapiens (Human)).